The chain runs to 322 residues: Cytochrome f (322 aa).

The first 35 residues, methionine 1 to serine 35, serve as a signal peptide directing secretion. Heme-binding residues include tyrosine 38, cysteine 58, cysteine 61, and histidine 62. The chain crosses the membrane as a helical span at residues valine 288–lysine 308.

It belongs to the cytochrome f family. As to quaternary structure, the 4 large subunits of the cytochrome b6-f complex are cytochrome b6, subunit IV (17 kDa polypeptide, petD), cytochrome f and the Rieske protein, while the 4 small subunits are PetG, PetL, PetM and PetN. The complex functions as a dimer. The cofactor is heme.

It localises to the plastid. The protein localises to the chloroplast thylakoid membrane. Component of the cytochrome b6-f complex, which mediates electron transfer between photosystem II (PSII) and photosystem I (PSI), cyclic electron flow around PSI, and state transitions. In Nandina domestica (Heavenly bamboo), this protein is Cytochrome f.